Here is a 364-residue protein sequence, read N- to C-terminus: Aminomethyltransferase (364 aa).

This sequence belongs to the GcvT family. As to quaternary structure, the glycine cleavage system is composed of four proteins: P, T, L and H.

The catalysed reaction is N(6)-[(R)-S(8)-aminomethyldihydrolipoyl]-L-lysyl-[protein] + (6S)-5,6,7,8-tetrahydrofolate = N(6)-[(R)-dihydrolipoyl]-L-lysyl-[protein] + (6R)-5,10-methylene-5,6,7,8-tetrahydrofolate + NH4(+). Functionally, the glycine cleavage system catalyzes the degradation of glycine. The protein is Aminomethyltransferase of Escherichia coli (strain 55989 / EAEC).